The primary structure comprises 276 residues: Mediator of RNA polymerase II transcription subunit 7 (276 aa).

Composition is skewed to basic and acidic residues over residues 1 to 11 (MADADAQRQAE) and 234 to 263 (FGRE…RDAQ). Disordered stretches follow at residues 1–27 (MADA…PPPF) and 234–276 (FGRE…MLSQ).

It belongs to the Mediator complex subunit 7 family. Component of the Mediator complex.

Its subcellular location is the nucleus. Component of the Mediator complex, a coactivator involved in the regulated transcription of nearly all RNA polymerase II-dependent genes. Mediator functions as a bridge to convey information from gene-specific regulatory proteins to the basal RNA polymerase II transcription machinery. Mediator is recruited to promoters by direct interactions with regulatory proteins and serves as a scaffold for the assembly of a functional preinitiation complex with RNA polymerase II and the general transcription factors. This is Mediator of RNA polymerase II transcription subunit 7 (MED7) from Phaeosphaeria nodorum (strain SN15 / ATCC MYA-4574 / FGSC 10173) (Glume blotch fungus).